We begin with the raw amino-acid sequence, 388 residues long: LL-diaminopimelate aminotransferase (388 aa).

Substrate-binding residues include Tyr-13, Gly-38, Lys-102, Tyr-126, and Asn-176. Pyridoxal 5'-phosphate-binding positions include 101–102 (SK), Tyr-126, Asn-176, Tyr-207, and 235–237 (SLS). At Lys-238 the chain carries N6-(pyridoxal phosphate)lysine. A pyridoxal 5'-phosphate-binding site is contributed by Arg-246. Residue Arg-364 coordinates substrate.

The protein belongs to the class-I pyridoxal-phosphate-dependent aminotransferase family. LL-diaminopimelate aminotransferase subfamily. As to quaternary structure, homodimer. Pyridoxal 5'-phosphate is required as a cofactor.

It carries out the reaction (2S,6S)-2,6-diaminopimelate + 2-oxoglutarate = (S)-2,3,4,5-tetrahydrodipicolinate + L-glutamate + H2O + H(+). The protein operates within amino-acid biosynthesis; L-lysine biosynthesis via DAP pathway; LL-2,6-diaminopimelate from (S)-tetrahydrodipicolinate (aminotransferase route): step 1/1. Its function is as follows. Involved in the synthesis of meso-diaminopimelate (m-DAP or DL-DAP), required for both lysine and peptidoglycan biosynthesis. Catalyzes the direct conversion of tetrahydrodipicolinate to LL-diaminopimelate. This Dehalococcoides mccartyi (strain ATCC BAA-2266 / KCTC 15142 / 195) (Dehalococcoides ethenogenes (strain 195)) protein is LL-diaminopimelate aminotransferase.